We begin with the raw amino-acid sequence, 170 residues long: uncharacterized protein (170 aa).

This is an uncharacterized protein from Myxococcus xanthus.